Reading from the N-terminus, the 109-residue chain is UPF0060 membrane protein ABO_1373 (109 aa).

The next 4 helical transmembrane spans lie at 1–21, 33–53, 63–83, and 87–107; these read MLALYTLGLFILTAVTEIVGC, PGWVLLPAAASLAMFAWLLSL, AAYGGVYVFVALLWLWGVEGV, and PWDFVGVAVALAGMGIIMFAP.

It belongs to the UPF0060 family.

Its subcellular location is the cell inner membrane. In Alcanivorax borkumensis (strain ATCC 700651 / DSM 11573 / NCIMB 13689 / SK2), this protein is UPF0060 membrane protein ABO_1373.